The sequence spans 652 residues: Acetyl-coenzyme A synthetase (652 aa).

Residues 191–194 (RAGR), T311, and N335 contribute to the CoA site. Residues 387 to 389 (GEP), 411 to 416 (DTWWQT), D500, and R515 each bind ATP. S523 provides a ligand contact to CoA. R526 is an ATP binding site. V537, H539, and I542 together coordinate Mg(2+). R584 provides a ligand contact to CoA. N6-acetyllysine is present on K609.

This sequence belongs to the ATP-dependent AMP-binding enzyme family. Requires Mg(2+) as cofactor. Acetylated. Deacetylation by the SIR2-homolog deacetylase activates the enzyme.

The catalysed reaction is acetate + ATP + CoA = acetyl-CoA + AMP + diphosphate. In terms of biological role, catalyzes the conversion of acetate into acetyl-CoA (AcCoA), an essential intermediate at the junction of anabolic and catabolic pathways. Acs undergoes a two-step reaction. In the first half reaction, Acs combines acetate with ATP to form acetyl-adenylate (AcAMP) intermediate. In the second half reaction, it can then transfer the acetyl group from AcAMP to the sulfhydryl group of CoA, forming the product AcCoA. Enables the cell to use acetate during aerobic growth to generate energy via the TCA cycle, and biosynthetic compounds via the glyoxylate shunt. Acetylates CheY, the response regulator involved in flagellar movement and chemotaxis. This is Acetyl-coenzyme A synthetase from Yersinia pestis.